The primary structure comprises 253 residues: Sugar fermentation stimulation protein homolog (253 aa).

Belongs to the SfsA family.

In Chromohalobacter salexigens (strain ATCC BAA-138 / DSM 3043 / CIP 106854 / NCIMB 13768 / 1H11), this protein is Sugar fermentation stimulation protein homolog.